The chain runs to 254 residues: uncharacterized protein (254 aa).

8 helical membrane-spanning segments follow: residues 41–61, 64–84, 91–111, 125–145, 146–166, 172–192, 204–224, and 232–252; these read LFVFLFFLFATTISFTQIKII, ILQAPAVGIKFLQLAPGEYFF, IYCGIVATTPFAVYQVILYIL, LLISSVLLFITGGIFAYFVLA, PAALTFLISYGSDIVEPLWSF, FILLLLLSTGLAFEIPIIQLL, MIRAWRYIIIIATIAGAILTP, and LIMSSAVLLLYFGGIVILLVL.

The protein belongs to the TatC family.

The protein resides in the plastid. It is found in the chloroplast membrane. This is an uncharacterized protein from Pyropia yezoensis (Susabi-nori).